A 694-amino-acid polypeptide reads, in one-letter code: Phosphatase and actin regulator 4-A (694 aa).

2 stretches are compositionally biased toward basic and acidic residues: residues 1–13 and 46–72; these read MEDRSEEGGDHSE and SSDSFRETSEVLERKISTRKPREELIK. Disordered regions lie at residues 1 to 29, 42 to 169, 192 to 403, 426 to 445, and 450 to 572; these read MEDRSEEGGDHSEMPSAPSTPPSKRKSKF, RKRK…QPLP, VNEV…HIRI, LFMQNDMGPSEEGTRVRSLP, and LLKV…QIRQ. Residues 55–80 form an RPEL 1 repeat; the sequence is EVLERKISTRKPREELIKRGLLVEVP. Residues 240 to 267 are compositionally biased toward polar residues; it reads SISTSVTQESAVAGQKSDSSNRLQSSAP. Over residues 300–317 the composition is skewed to low complexity; the sequence is AELSLALAGSPLSPAGSR. Composition is skewed to pro residues over residues 318-327 and 372-381; these read PSPPLPPKRA and SNPPVPPLTL. Composition is skewed to acidic residues over residues 455 to 467, 499 to 511, and 519 to 529; these read DDEDDESLEDESL, QEEEEGGVSDTDS, and DDEEEEEEEET. RPEL repeat units lie at residues 576-601 and 613-638; these read TQLNRRLSQRPTAEELEQRNILQKNE and RRLTRKLSQRPTVAELVERKILRFNE.

This sequence belongs to the phosphatase and actin regulator family. Binds ppp1ca and actin.

It is found in the cytoplasm. Its subcellular location is the cell projection. It localises to the lamellipodium. Its function is as follows. Regulator of protein phosphatase 1 (PP1) required for neural tube and optic fissure closure, and enteric neural crest cell (ENCCs) migration during development. Acts as an activator of PP1. During neural tube closure, localizes to the ventral neural tube and activates PP1, leading to down-regulate cell proliferation within cranial neural tissue and the neural retina. Also acts as a regulator of migration of enteric neural crest cells (ENCCs) by activating PP1, leading to repression of the integrin signaling through the rho/rock pathway. This Xenopus laevis (African clawed frog) protein is Phosphatase and actin regulator 4-A (phactr4-a).